The chain runs to 43 residues: Protein PsbN (43 aa).

A helical transmembrane segment spans residues 4–24 (ATIIVIFVSSLLVGITAYSVY).

It belongs to the PsbN family.

The protein resides in the plastid. It localises to the chloroplast thylakoid membrane. Its function is as follows. May play a role in photosystem I and II biogenesis. This is Protein PsbN from Thalassiosira pseudonana (Marine diatom).